Consider the following 452-residue polypeptide: Phosphoglucosamine mutase (452 aa).

The active-site Phosphoserine intermediate is the Ser-105. Residues Ser-105, Asp-244, Asp-246, and Asp-248 each contribute to the Mg(2+) site. Ser-105 carries the post-translational modification Phosphoserine.

This sequence belongs to the phosphohexose mutase family. Requires Mg(2+) as cofactor. Activated by phosphorylation.

The catalysed reaction is alpha-D-glucosamine 1-phosphate = D-glucosamine 6-phosphate. In terms of biological role, catalyzes the conversion of glucosamine-6-phosphate to glucosamine-1-phosphate. The polypeptide is Phosphoglucosamine mutase (Blochmanniella floridana).